The chain runs to 199 residues: Recombination protein RecR (199 aa).

The segment at 57 to 72 adopts a C4-type zinc-finger fold; that stretch reads CRQCRVLTEEPVCGLC. Residues 80–175 form the Toprim domain; sequence SLLCVVEGPA…RTTRIAHGVP (96 aa).

This sequence belongs to the RecR family.

Functionally, may play a role in DNA repair. It seems to be involved in an RecBC-independent recombinational process of DNA repair. It may act with RecF and RecO. This is Recombination protein RecR from Alkalilimnicola ehrlichii (strain ATCC BAA-1101 / DSM 17681 / MLHE-1).